A 169-amino-acid polypeptide reads, in one-letter code: MAQHQVNYASNAGLPVALTTVDKLVNWGRTNSLWVLTYGLACCAIEMMASGASRYDFDRFGVIFRASPRQSDVMIVAGTLTKKHAEFIRRLYDQMAEPKWVISMGSCANTGGMFNTYATVQGVDRVIPVDIYLPGCAPRPETLQYAVMLLQKKLRKRSIFQKQKPKRLV.

The [4Fe-4S] cluster site is built by Cys42, Cys43, Cys107, and Cys136.

Belongs to the complex I 20 kDa subunit family. As to quaternary structure, NDH-1 is composed of 14 different subunits. Subunits NuoB, C, D, E, F, and G constitute the peripheral sector of the complex. [4Fe-4S] cluster is required as a cofactor.

It localises to the cell inner membrane. It carries out the reaction a quinone + NADH + 5 H(+)(in) = a quinol + NAD(+) + 4 H(+)(out). Its function is as follows. NDH-1 shuttles electrons from NADH, via FMN and iron-sulfur (Fe-S) centers, to quinones in the respiratory chain. The immediate electron acceptor for the enzyme in this species is believed to be ubiquinone. Couples the redox reaction to proton translocation (for every two electrons transferred, four hydrogen ions are translocated across the cytoplasmic membrane), and thus conserves the redox energy in a proton gradient. The polypeptide is NADH-quinone oxidoreductase subunit B (Nitratiruptor sp. (strain SB155-2)).